Reading from the N-terminus, the 607-residue chain is Chaperone protein DnaK (607 aa).

Thr-174 is modified (phosphothreonine; by autocatalysis). Residues 571 to 607 (AAMYQKQAQQQQPGPGPDAGKDKDDKDKTVDADYEVK) are disordered. Basic and acidic residues predominate over residues 589–607 (AGKDKDDKDKTVDADYEVK).

It belongs to the heat shock protein 70 family.

In terms of biological role, acts as a chaperone. In Desulforudis audaxviator (strain MP104C), this protein is Chaperone protein DnaK.